A 232-amino-acid chain; its full sequence is tRNA1(Val) (adenine(37)-N6)-methyltransferase (232 aa).

Belongs to the methyltransferase superfamily. tRNA (adenine-N(6)-)-methyltransferase family.

The protein localises to the cytoplasm. The enzyme catalyses adenosine(37) in tRNA1(Val) + S-adenosyl-L-methionine = N(6)-methyladenosine(37) in tRNA1(Val) + S-adenosyl-L-homocysteine + H(+). Specifically methylates the adenine in position 37 of tRNA(1)(Val) (anticodon cmo5UAC). The polypeptide is tRNA1(Val) (adenine(37)-N6)-methyltransferase (Haemophilus influenzae (strain PittEE)).